A 145-amino-acid polypeptide reads, in one-letter code: Cell division protein SepF (145 aa).

It belongs to the SepF family. As to quaternary structure, homodimer. Interacts with FtsZ.

Its subcellular location is the cytoplasm. Functionally, cell division protein that is part of the divisome complex and is recruited early to the Z-ring. Probably stimulates Z-ring formation, perhaps through the cross-linking of FtsZ protofilaments. Its function overlaps with FtsA. This Lactobacillus acidophilus (strain ATCC 700396 / NCK56 / N2 / NCFM) protein is Cell division protein SepF.